The chain runs to 72 residues: MAKDDVIEIDGKVVEALPNATFRVELDNGHIVLCHIAGKMRMHYIKILPGDKVKVELTPYSLDKGRITFRYK.

Residues 1 to 72 (MAKDDVIEID…DKGRITFRYK (72 aa)) enclose the S1-like domain.

The protein belongs to the IF-1 family. In terms of assembly, component of the 30S ribosomal translation pre-initiation complex which assembles on the 30S ribosome in the order IF-2 and IF-3, IF-1 and N-formylmethionyl-tRNA(fMet); mRNA recruitment can occur at any time during PIC assembly.

The protein localises to the cytoplasm. One of the essential components for the initiation of protein synthesis. Stabilizes the binding of IF-2 and IF-3 on the 30S subunit to which N-formylmethionyl-tRNA(fMet) subsequently binds. Helps modulate mRNA selection, yielding the 30S pre-initiation complex (PIC). Upon addition of the 50S ribosomal subunit IF-1, IF-2 and IF-3 are released leaving the mature 70S translation initiation complex. In Sulfurovum sp. (strain NBC37-1), this protein is Translation initiation factor IF-1.